The primary structure comprises 335 residues: Cell division protein ZipA (335 aa).

Over 1 to 4 (MDLN) the chain is Periplasmic. Residues 5 to 25 (AILIILGVIALIILVAHGIWS) traverse the membrane as a helical segment. The Cytoplasmic segment spans residues 26-335 (NRCEKSQYFE…AERDYLARVS (310 aa)).

It belongs to the ZipA family. In terms of assembly, interacts with FtsZ via their C-terminal domains.

The protein resides in the cell inner membrane. Essential cell division protein that stabilizes the FtsZ protofilaments by cross-linking them and that serves as a cytoplasmic membrane anchor for the Z ring. Also required for the recruitment to the septal ring of downstream cell division proteins. The sequence is that of Cell division protein ZipA from Histophilus somni (strain 129Pt) (Haemophilus somnus).